A 910-amino-acid polypeptide reads, in one-letter code: Leucine--tRNA ligase (910 aa).

Residues 42-52 carry the 'HIGH' region motif; it reads PYPSGKLHMGH. The 'KMSKS' region motif lies at 658–662; the sequence is TMSKS. Position 661 (Lys-661) interacts with ATP.

It belongs to the class-I aminoacyl-tRNA synthetase family.

It is found in the cytoplasm. It catalyses the reaction tRNA(Leu) + L-leucine + ATP = L-leucyl-tRNA(Leu) + AMP + diphosphate. This Acidovorax ebreus (strain TPSY) (Diaphorobacter sp. (strain TPSY)) protein is Leucine--tRNA ligase.